We begin with the raw amino-acid sequence, 555 residues long: Phosphoglucomutase (555 aa).

Positions 22 and 114 each coordinate alpha-D-glucose 1,6-bisphosphate. Ser114 serves as the catalytic Phosphoserine intermediate. The Mg(2+) site is built by Ser114, Asp279, Asp281, and Asp283. Ser114 carries the phosphoserine modification. Alpha-D-glucose 1,6-bisphosphate contacts are provided by Asp283, Arg284, Thr347, Glu366, Ser368, and Lys379.

Belongs to the phosphohexose mutase family. Monomer. Requires Mg(2+) as cofactor.

The protein resides in the cytoplasm. It carries out the reaction alpha-D-glucose 1-phosphate = alpha-D-glucose 6-phosphate. It catalyses the reaction O-phospho-L-seryl-[protein] + alpha-D-glucose 1-phosphate = alpha-D-glucose 1,6-bisphosphate + L-seryl-[protein]. The enzyme catalyses alpha-D-glucose 1,6-bisphosphate + L-seryl-[protein] = O-phospho-L-seryl-[protein] + alpha-D-glucose 6-phosphate. In terms of biological role, catalyzes the reversible isomerization of alpha-D-glucose 1-phosphate to alpha-D-glucose 6-phosphate. The mechanism proceeds via the intermediate compound alpha-D-glucose 1,6-bisphosphate. Key enzyme in hexose metabolism. The reverse reaction is an essential step for biosynthesis because glucose 1-phosphate is the starting point for the synthesis of UDP-glucose, which acts as a precursor for the synthesis of oligosaccharides and trehalose. The sequence is that of Phosphoglucomutase (pgmA) from Aspergillus oryzae (strain ATCC 42149 / RIB 40) (Yellow koji mold).